Consider the following 167-residue polypeptide: NAD(P)H-quinone oxidoreductase subunit J (167 aa).

It belongs to the complex I 30 kDa subunit family. NDH-1 can be composed of about 15 different subunits; different subcomplexes with different compositions have been identified which probably have different functions.

Its subcellular location is the cellular thylakoid membrane. It catalyses the reaction a plastoquinone + NADH + (n+1) H(+)(in) = a plastoquinol + NAD(+) + n H(+)(out). The catalysed reaction is a plastoquinone + NADPH + (n+1) H(+)(in) = a plastoquinol + NADP(+) + n H(+)(out). Its function is as follows. NDH-1 shuttles electrons from an unknown electron donor, via FMN and iron-sulfur (Fe-S) centers, to quinones in the respiratory and/or the photosynthetic chain. The immediate electron acceptor for the enzyme in this species is believed to be plastoquinone. Couples the redox reaction to proton translocation, and thus conserves the redox energy in a proton gradient. Cyanobacterial NDH-1 also plays a role in inorganic carbon-concentration. This Microcystis aeruginosa (strain NIES-843 / IAM M-2473) protein is NAD(P)H-quinone oxidoreductase subunit J.